The sequence spans 752 residues: Probable beta-glucosidase D (752 aa).

Residues 1-18 form the signal peptide; sequence MRFVSLAVGAALLGAAGA. 2 N-linked (GlcNAc...) asparagine glycosylation sites follow: asparagine 187 and asparagine 237. The active site involves aspartate 265. Residues asparagine 299, asparagine 343, asparagine 441, asparagine 510, asparagine 532, asparagine 571, asparagine 586, asparagine 638, asparagine 661, and asparagine 743 are each glycosylated (N-linked (GlcNAc...) asparagine).

The protein belongs to the glycosyl hydrolase 3 family.

Its subcellular location is the secreted. The catalysed reaction is Hydrolysis of terminal, non-reducing beta-D-glucosyl residues with release of beta-D-glucose.. It functions in the pathway glycan metabolism; cellulose degradation. Beta-glucosidases are one of a number of cellulolytic enzymes involved in the degradation of cellulosic biomass. Catalyzes the last step releasing glucose from the inhibitory cellobiose. The polypeptide is Probable beta-glucosidase D (bglD) (Aspergillus flavus (strain ATCC 200026 / FGSC A1120 / IAM 13836 / NRRL 3357 / JCM 12722 / SRRC 167)).